Consider the following 489-residue polypeptide: MAVFATQRLYIGGGYVDATSGETFDTLDPATGETLASVQQASAADVDRAVRSAKQGQREWAALTAMQRSRILRRAVDLLRERNDELAALETRDTGKPIAETLAVDIVTGADVIEYYAGLATAIEGQQIPLRPTSFVYTRREPLGVCAGIGAWNYPIQIACWKSAPALAAGNAMIFKPSEITPLSALKLAEIFTEAGVPAGVFNVVQGDGRVGAMLAAHPDIEKISFTGGVETGKKVMSMAGASSLKEVTMELGGKSPLLVFDDANLERAADIATSANFFSSGQVCTNGTRVFVQRGVLDRFEALVLERVKRIRVGKPTDAATNFGPLVSAAQLHKVLGYIESGKQEGARLVAGGKRLTEGHFAGGQYVEPTVFADCRDDMRIVREEIFGPVMSILVFDDEDEAIARANHTAYGLAAGVVTENLARAHRVIHRLEAGICWINTWGESPAEMPVGGYKQSGVGRENGITTLEHYTRIKSVQVELGPYQPVF.

Residues Thr26 and Asp93 each contribute to the K(+) site. NAD(+) is bound at residue 150-152; sequence GAW. Residue Lys162 is the Charge relay system of the active site. NAD(+) is bound at residue 176-179; sequence KPSE. Ile180 contacts K(+). 229–232 contacts NAD(+); sequence GVET. Position 245 (Leu245) interacts with K(+). The active-site Proton acceptor is the Glu251. Gly253, Cys285, and Glu386 together coordinate NAD(+). Cys285 serves as the catalytic Nucleophile. Cys285 carries the post-translational modification Cysteine sulfenic acid (-SOH). The K(+) site is built by Lys456 and Gly459. The active-site Charge relay system is the Glu463.

This sequence belongs to the aldehyde dehydrogenase family. Dimer of dimers. The cofactor is K(+).

It carries out the reaction betaine aldehyde + NAD(+) + H2O = glycine betaine + NADH + 2 H(+). The protein operates within amine and polyamine biosynthesis; betaine biosynthesis via choline pathway; betaine from betaine aldehyde: step 1/1. In terms of biological role, involved in the biosynthesis of the osmoprotectant glycine betaine. Catalyzes the irreversible oxidation of betaine aldehyde to the corresponding acid. The sequence is that of Betaine aldehyde dehydrogenase from Paraburkholderia phytofirmans (strain DSM 17436 / LMG 22146 / PsJN) (Burkholderia phytofirmans).